The following is a 249-amino-acid chain: 2,3-bisphosphoglycerate-dependent phosphoglycerate mutase (249 aa).

Residues 9–16 (RHGESEWN), 22–23 (TG), R61, 88–91 (ERHY), K99, 115–116 (RR), and 184–185 (GN) each bind substrate. H10 (tele-phosphohistidine intermediate) is an active-site residue. The Proton donor/acceptor role is filled by E88.

It belongs to the phosphoglycerate mutase family. BPG-dependent PGAM subfamily.

It catalyses the reaction (2R)-2-phosphoglycerate = (2R)-3-phosphoglycerate. Its pathway is carbohydrate degradation; glycolysis; pyruvate from D-glyceraldehyde 3-phosphate: step 3/5. Catalyzes the interconversion of 2-phosphoglycerate and 3-phosphoglycerate. The polypeptide is 2,3-bisphosphoglycerate-dependent phosphoglycerate mutase (Cutibacterium acnes (strain DSM 16379 / KPA171202) (Propionibacterium acnes)).